The sequence spans 69 residues: MNNIIDSSKYRLNRCIPSVFGDTNTPHITSSMIIDVLYVGKIYERCRLGCRTRTQGMFRVVLNAQLNIQ.

This is an uncharacterized protein from Saccharomyces cerevisiae (strain ATCC 204508 / S288c) (Baker's yeast).